A 477-amino-acid chain; its full sequence is Delayed-rectifier potassium channel regulatory subunit KCNS2 (477 aa).

The Cytoplasmic portion of the chain corresponds to 1–184; sequence MTGQSLWDVS…LALDNPGYSV (184 aa). A helical membrane pass occupies residues 185 to 206; the sequence is LSRVFSILSILVVMGSIITMCL. The Extracellular segment spans residues 207–225; the sequence is NSLPDFQIPDSQGNPGEDP. A helical transmembrane segment spans residues 226 to 248; the sequence is RFEIVEHFGIAWFTFELVARFAV. The Cytoplasmic portion of the chain corresponds to 249-259; sequence APDFLKFFKNA. A helical membrane pass occupies residues 260–280; sequence LNLIDLMSIVPFYITLVVNLV. Over 281-290 the chain is Extracellular; that stretch reads VESTPTLANL. The chain crosses the membrane as a helical; Voltage-sensor span at residues 291–311; sequence GRVAQVLRLMRIFRILKLARH. At 312-326 the chain is on the cytoplasmic side; sequence STGLRSLGATLKYSY. Residues 327-348 traverse the membrane as a helical segment; that stretch reads KEVGLLLLYLSVGISIFSVVAY. The Extracellular portion of the chain corresponds to 349 to 361; it reads TIEKEENEGLATI. Positions 362 to 373 form an intramembrane region, helical; it reads PACWWWATVSMT. The Selectivity filter motif lies at 374–379; sequence TVGYGD. An intramembrane segment occupies 374–381; the sequence is TVGYGDVV. Over 382-388 the chain is Extracellular; the sequence is PGTTAGK. Residues 389 to 417 traverse the membrane as a helical segment; sequence LTASACILAGILVVVLPITLIFNKFSHFY. Topologically, residues 418-477 are cytoplasmic; the sequence is RRQKQLESAMRSCDFGDGMKEVPSVNLRDYYAHKVKSLMASLTNMSRSSPSELSLNDSLR.

This sequence belongs to the potassium channel family. S (TC 1.A.1.2) subfamily. Kv9.2/KCNS2 sub-subfamily. In terms of assembly, heterotetramer with KCNB1 and KCNB2. Does not form homomultimers.

It is found in the cell membrane. Potassium channel regulatory subunit that modulate the delayed rectifier voltage-gated potassium channel activity of KCNB1 and KCNB2 by altering their kinetics, expression levels, and shifting the half-inactivation potential to more polarized values. While it does not form functional channels on its own, it can form functional heterotetrameric channels with KCNB1 and KCNB2. Each regulatory subunit has unique regulatory properties that can lead to extensive inhibition, significant changes in kinetics, and/or substantial shifts in the voltage dependencies of the inactivation process. This chain is Delayed-rectifier potassium channel regulatory subunit KCNS2, found in Homo sapiens (Human).